Here is a 417-residue protein sequence, read N- to C-terminus: NADH-quinone oxidoreductase subunit D (417 aa).

The protein belongs to the complex I 49 kDa subunit family. As to quaternary structure, NDH-1 is composed of 14 different subunits. Subunits NuoB, C, D, E, F, and G constitute the peripheral sector of the complex.

The protein localises to the cell inner membrane. It catalyses the reaction a quinone + NADH + 5 H(+)(in) = a quinol + NAD(+) + 4 H(+)(out). Its function is as follows. NDH-1 shuttles electrons from NADH, via FMN and iron-sulfur (Fe-S) centers, to quinones in the respiratory chain. The immediate electron acceptor for the enzyme in this species is believed to be ubiquinone. Couples the redox reaction to proton translocation (for every two electrons transferred, four hydrogen ions are translocated across the cytoplasmic membrane), and thus conserves the redox energy in a proton gradient. The polypeptide is NADH-quinone oxidoreductase subunit D (Francisella tularensis subsp. holarctica (strain FTNF002-00 / FTA)).